We begin with the raw amino-acid sequence, 85 residues long: MLKFAIAVALLLFIGLELREARDGYPQSKVNYCKIYCPNTTVCQWTCKNRAGATDGDCRWSSCYCFNVAPDTVLYGDPGTKPCMA.

The first 21 residues, 1–21, serve as a signal peptide directing secretion; sequence MLKFAIAVALLLFIGLELREA. Residues 22-84 enclose the LCN-type CS-alpha/beta domain; the sequence is RDGYPQSKVN…YGDPGTKPCM (63 aa). Cystine bridges form between Cys-33–Cys-83, Cys-37–Cys-58, Cys-43–Cys-63, and Cys-47–Cys-65.

The protein belongs to the long (4 C-C) scorpion toxin superfamily. Sodium channel inhibitor family. Beta subfamily. Expressed by the venom gland.

It is found in the secreted. Its function is as follows. Alpha toxins bind voltage-independently at site-3 of sodium channels (Nav) and inhibit the inactivation of the activated channels, thereby blocking neuronal transmission. This toxin binds, in vitro, to sodium channels and inhibits the inactivation of the activated channels. Seems not toxic to mice, crickets and sweet-water shrimps. The protein is Toxin TdNa9 of Tityus discrepans (Venezuelan scorpion).